Consider the following 204-residue polypeptide: FMN-dependent NADH:quinone oxidoreductase (204 aa).

Residues Ser9 and 15–17 (SAS) each bind FMN.

Belongs to the azoreductase type 1 family. Homodimer. Requires FMN as cofactor.

It carries out the reaction 2 a quinone + NADH + H(+) = 2 a 1,4-benzosemiquinone + NAD(+). The catalysed reaction is N,N-dimethyl-1,4-phenylenediamine + anthranilate + 2 NAD(+) = 2-(4-dimethylaminophenyl)diazenylbenzoate + 2 NADH + 2 H(+). In terms of biological role, quinone reductase that provides resistance to thiol-specific stress caused by electrophilic quinones. Its function is as follows. Also exhibits azoreductase activity. Catalyzes the reductive cleavage of the azo bond in aromatic azo compounds to the corresponding amines. The sequence is that of FMN-dependent NADH:quinone oxidoreductase from Xanthomonas campestris pv. campestris (strain ATCC 33913 / DSM 3586 / NCPPB 528 / LMG 568 / P 25).